A 486-amino-acid chain; its full sequence is Recombining binding protein suppressor of hairless (486 aa).

DNA-binding regions lie at residues 43-53 (QKSYGNEKRFF) and 151-156 (SKPSKK). An N6-acetyllysine modification is found at Lys161. Residues 178–183 (RLRSQT) are DNA-binding. Positions 341–431 (PVVESLQLNG…YSTSLTFTYT (91 aa)) constitute an IPT/TIG domain. Polar residues predominate over residues 451 to 467 (SSQVPPNESNTNSEGSY). The tract at residues 451 to 486 (SSQVPPNESNTNSEGSYTNASTNSTSVTSSTATVVS) is disordered. Residues 468-486 (TNASTNSTSVTSSTATVVS) show a composition bias toward low complexity.

It belongs to the Su(H) family. In terms of assembly, interacts with activated NOTCH1, NOTCH2 or NOTCH3. Interacts with MINT/SHARP. This interaction may mediate the recruitment of large corepressor complexes containing proteins such as HDAC1, HDAC2, NCOR2, SAP30, FHL1/KYOT2 and CIR1. Interacts with EP300, MAML1 and PTF1A. Interacts with RITA1, leading to nuclear export, prevent the interaction between RBPJ and NICD product and subsequent down-regulation of the Notch signaling pathway. Interacts with SNW1. Interacts with CHCHD2 and CXXC5. Interacts with BEND6 (via BEN domain). Interacts with NKAPL. Interacts with ZMIZ1. Interacts with RBM15. Interacts with L3MBTL3 and KDM1A; the interaction with KDM1A is weaker in the absence of L3MBTL3 and the interaction with L3MBTL3 is impaired by Notch-derived peptides containing the intracellular domain (NICD).

Its subcellular location is the nucleus. The protein localises to the cytoplasm. Transcriptional regulator that plays a central role in Notch signaling, a signaling pathway involved in cell-cell communication that regulates a broad spectrum of cell-fate determinations. Acts as a transcriptional repressor when it is not associated with Notch proteins. When associated with some NICD product of Notch proteins (Notch intracellular domain), it acts as a transcriptional activator that activates transcription of Notch target genes. Probably represses or activates transcription via the recruitment of chromatin remodeling complexes containing histone deacetylase or histone acetylase proteins, respectively. Specifically binds to the immunoglobulin kappa-type J segment recombination signal sequence. Binds specifically to methylated DNA. Binds to the oxygen responsive element of COX4I2 and activates its transcription under hypoxia conditions (4% oxygen). Negatively regulates the phagocyte oxidative burst in response to bacterial infection by repressing transcription of NADPH oxidase subunits. In Pongo abelii (Sumatran orangutan), this protein is Recombining binding protein suppressor of hairless (RBPJ).